A 66-amino-acid polypeptide reads, in one-letter code: Large ribosomal subunit protein bL35 (66 aa).

The protein belongs to the bacterial ribosomal protein bL35 family.

This chain is Large ribosomal subunit protein bL35, found in Azorhizobium caulinodans (strain ATCC 43989 / DSM 5975 / JCM 20966 / LMG 6465 / NBRC 14845 / NCIMB 13405 / ORS 571).